A 328-amino-acid chain; its full sequence is Ketol-acid reductoisomerase (NADP(+)) (328 aa).

Residues A2–T182 form the KARI N-terminal Rossmann domain. NADP(+)-binding positions include Y25–Q28, R48, S53, and D83–Q86. The active site involves H108. G134 contributes to the NADP(+) binding site. The region spanning T183–P328 is the KARI C-terminal knotted domain. Mg(2+) is bound by residues D191, E195, E227, and E231. Residue S252 coordinates substrate.

The protein belongs to the ketol-acid reductoisomerase family. It depends on Mg(2+) as a cofactor.

It catalyses the reaction (2R)-2,3-dihydroxy-3-methylbutanoate + NADP(+) = (2S)-2-acetolactate + NADPH + H(+). The enzyme catalyses (2R,3R)-2,3-dihydroxy-3-methylpentanoate + NADP(+) = (S)-2-ethyl-2-hydroxy-3-oxobutanoate + NADPH + H(+). Its pathway is amino-acid biosynthesis; L-isoleucine biosynthesis; L-isoleucine from 2-oxobutanoate: step 2/4. It functions in the pathway amino-acid biosynthesis; L-valine biosynthesis; L-valine from pyruvate: step 2/4. In terms of biological role, involved in the biosynthesis of branched-chain amino acids (BCAA). Catalyzes an alkyl-migration followed by a ketol-acid reduction of (S)-2-acetolactate (S2AL) to yield (R)-2,3-dihydroxy-isovalerate. In the isomerase reaction, S2AL is rearranged via a Mg-dependent methyl migration to produce 3-hydroxy-3-methyl-2-ketobutyrate (HMKB). In the reductase reaction, this 2-ketoacid undergoes a metal-dependent reduction by NADPH to yield (R)-2,3-dihydroxy-isovalerate. The chain is Ketol-acid reductoisomerase (NADP(+)) from Pyrobaculum calidifontis (strain DSM 21063 / JCM 11548 / VA1).